We begin with the raw amino-acid sequence, 2646 residues long: Probable inactive serine/threonine-protein kinase roco10 (2646 aa).

7 disordered regions span residues 28–122 (LNYS…LSGG), 138–168 (NIPIPPVPTSPTSTPPNLQTNNNNKQDKDKD), 205–248 (PLFI…VSPS), 281–457 (QQQR…VKQA), 477–516 (MSKLVSQSKEQYKTPSSPYQQSTSSSISSGSGTISGHTSP), 605–656 (TSPN…PHQY), and 882–907 (QSSSSSSSSSISNSSSASSSSSSTPS). Over residues 46-56 (PQQNLLENDTL) the composition is skewed to polar residues. 3 stretches are compositionally biased toward low complexity: residues 78 to 115 (IITTTTTTTTTTAMSPVATTTTSSPTISASPTYITSPS), 147 to 161 (SPTSTPPNLQTNNNN), and 215 to 228 (SRNNNGKRNSGGNK). Polar residues predominate over residues 235-248 (KISSTSAAGDVSPS). 2 stretches are compositionally biased toward low complexity: residues 285 to 297 (NGNNNNNNNNNNN) and 325 to 334 (NNNNNNNNNN). Positions 335–345 (KQPQHPMNGNH) are enriched in polar residues. Over residues 346–394 (SPSNGTSGSLSMSGSGIDNGGNNNNNSNTHGSSSNQSSGVTSPIIQSTS) the composition is skewed to low complexity. Polar residues-rich tracts occupy residues 402–416 (GLNSDSQMPLSSSPT) and 428–443 (TSASAVSSQNRSPLMN). Composition is skewed to low complexity over residues 444 to 454 (STGVSSSSSGV), 491 to 516 (PSSPYQQSTSSSISSGSGTISGHTSP), 605 to 627 (TSPNLSSSLSSSSSSGSSGNSSP), 634 to 651 (QQQQQPQPTTTTTTNTNT), and 883 to 907 (SSSSSSSSSISNSSSASSSSSSTPS). Residues 585-807 (SSISPISTAA…MFIQQADILF (223 aa)) enclose the Rho-GAP domain. 15 LRR repeats span residues 968–987 (QKLDMFSLELESLPNEIKQL), 989–1011 (DLQELNLNRNKFKLLPGDLARLT), 1012–1033 (SLRTICIEENNLTEISSEMADF), 1040–1061 (NLENVTLSSNRLVVLPPLYTWL), 1062–1083 (KLKTLNISNNYLTKLPIDIFQI), 1085–1108 (TLEVLRVSNNDLDDNGIPKICTST), 1109–1131 (KLRSLDLRKNHLTSIPEGIINLV), 1132–1154 (ELQVLTLADNQISHLTSDIQKLT), 1155–1176 (SLTELNLNGNQIQSLPPQLLLL), 1178–1199 (NLKKLYLDNNQLQSISSAIHRM), 1201–1222 (SLIELRLTNNNISRLPPGIVAL), 1224–1247 (KLNSLELTGNKPLKDNIPEKYIQK), 1248–1270 (GKEGIFSFFSETMRTNVPCYRTR), 1271–1298 (IIMLGDKSTGKSNLIKCLKKLPKSSFSS), and 1303–1327 (LPSLNNLNSNNSNNSGNSKTNILDI). Positions 1262–1474 (TNVPCYRTRI…RDIKQMIAKN (213 aa)) constitute a Roc domain. 3 disordered regions span residues 1293 to 1317 (KSSFSSSSSNLPSLNNLNSNNSNNS), 1651 to 1670 (NNNNSNGNNVGRGRSGSRSM), and 1957 to 2026 (NNSS…KEKE). A compositionally biased stretch (low complexity) spans 1651–1669 (NNNNSNGNNVGRGRSGSRS). Polar residues predominate over residues 1966–1975 (PIASSRSNPK). Low complexity predominate over residues 1983-1996 (NLIQSNNNDNNNSL). Basic and acidic residues predominate over residues 1997–2026 (SKKDLKELAKQNKEKEKEKEKDKDKEKEKE). One can recognise a Protein kinase domain in the interval 2049 to 2342 (FSICHFIKEI…PSKIISQLYT (294 aa)). ATP contacts are provided by residues 2055–2063 (IKEIDYREI) and Lys-2094. Positions 2412–2536 (MVVLNNKQST…FTVPTTNKNG (125 aa)) constitute an RGS domain.

Belongs to the protein kinase superfamily. TKL Ser/Thr protein kinase family. ROCO subfamily.

The polypeptide is Probable inactive serine/threonine-protein kinase roco10 (roco10) (Dictyostelium discoideum (Social amoeba)).